A 31-amino-acid polypeptide reads, in one-letter code: MLTITSYFGFLLAALTITSALFIGLSKTRLI.

Residues 4 to 24 (ITSYFGFLLAALTITSALFIG) traverse the membrane as a helical segment.

Belongs to the PetL family. In terms of assembly, the 4 large subunits of the cytochrome b6-f complex are cytochrome b6, subunit IV (17 kDa polypeptide, PetD), cytochrome f and the Rieske protein, while the 4 small subunits are PetG, PetL, PetM and PetN. The complex functions as a dimer.

It localises to the plastid. The protein resides in the chloroplast thylakoid membrane. Component of the cytochrome b6-f complex, which mediates electron transfer between photosystem II (PSII) and photosystem I (PSI), cyclic electron flow around PSI, and state transitions. PetL is important for photoautotrophic growth as well as for electron transfer efficiency and stability of the cytochrome b6-f complex. The protein is Cytochrome b6-f complex subunit 6 of Solanum tuberosum (Potato).